Here is a 345-residue protein sequence, read N- to C-terminus: Biotin synthase (345 aa).

The 226-residue stretch at 66–291 (PEVEIEGIIS…RTILRFAGGR (226 aa)) folds into the Radical SAM core domain. 3 residues coordinate [4Fe-4S] cluster: Cys81, Cys85, and Cys88. [2Fe-2S] cluster-binding residues include Cys124, Cys157, Cys216, and Arg286.

Belongs to the radical SAM superfamily. Biotin synthase family. In terms of assembly, homodimer. It depends on [4Fe-4S] cluster as a cofactor. Requires [2Fe-2S] cluster as cofactor.

The catalysed reaction is (4R,5S)-dethiobiotin + (sulfur carrier)-SH + 2 reduced [2Fe-2S]-[ferredoxin] + 2 S-adenosyl-L-methionine = (sulfur carrier)-H + biotin + 2 5'-deoxyadenosine + 2 L-methionine + 2 oxidized [2Fe-2S]-[ferredoxin]. The protein operates within cofactor biosynthesis; biotin biosynthesis; biotin from 7,8-diaminononanoate: step 2/2. Its function is as follows. Catalyzes the conversion of dethiobiotin (DTB) to biotin by the insertion of a sulfur atom into dethiobiotin via a radical-based mechanism. The sequence is that of Biotin synthase from Mycobacterium leprae (strain Br4923).